The primary structure comprises 313 residues: 3'-5' exoribonuclease YhaM (313 aa).

One can recognise an HD domain in the interval 163–279 (HVVSMLRLAK…LHQIDLMDAS (117 aa)).

It belongs to the YhaM family.

Shows a 3'-5' exoribonuclease activity. This chain is 3'-5' exoribonuclease YhaM, found in Listeria monocytogenes serotype 4b (strain CLIP80459).